A 433-amino-acid polypeptide reads, in one-letter code: F-box/kelch-repeat protein At1g24800 (433 aa).

One can recognise an F-box domain in the interval 23–71 (TSMCDLPPKLVGEKILTRIPITSLRAVRSTCKLWNALTKDRVLGKAAAQ). Kelch repeat units lie at residues 170-216 (HKIL…LYGV) and 286-337 (VLYH…RFDN).

This Arabidopsis thaliana (Mouse-ear cress) protein is F-box/kelch-repeat protein At1g24800.